We begin with the raw amino-acid sequence, 303 residues long: Pyridoxal 5'-phosphate synthase subunit PdxS (303 aa).

Asp-33 contacts D-ribose 5-phosphate. Residue Lys-90 is the Schiff-base intermediate with D-ribose 5-phosphate of the active site. Gly-162 provides a ligand contact to D-ribose 5-phosphate. Arg-174 serves as a coordination point for D-glyceraldehyde 3-phosphate. Residues Gly-223 and 244-245 (GS) contribute to the D-ribose 5-phosphate site.

It belongs to the PdxS/SNZ family. As to quaternary structure, in the presence of PdxT, forms a dodecamer of heterodimers.

The enzyme catalyses aldehydo-D-ribose 5-phosphate + D-glyceraldehyde 3-phosphate + L-glutamine = pyridoxal 5'-phosphate + L-glutamate + phosphate + 3 H2O + H(+). The protein operates within cofactor biosynthesis; pyridoxal 5'-phosphate biosynthesis. In terms of biological role, catalyzes the formation of pyridoxal 5'-phosphate from ribose 5-phosphate (RBP), glyceraldehyde 3-phosphate (G3P) and ammonia. The ammonia is provided by the PdxT subunit. Can also use ribulose 5-phosphate and dihydroxyacetone phosphate as substrates, resulting from enzyme-catalyzed isomerization of RBP and G3P, respectively. This chain is Pyridoxal 5'-phosphate synthase subunit PdxS, found in Streptomyces coelicolor (strain ATCC BAA-471 / A3(2) / M145).